Reading from the N-terminus, the 116-residue chain is Ribonuclease P protein component (116 aa).

This sequence belongs to the RnpA family. As to quaternary structure, consists of a catalytic RNA component (M1 or rnpB) and a protein subunit.

It catalyses the reaction Endonucleolytic cleavage of RNA, removing 5'-extranucleotides from tRNA precursor.. RNaseP catalyzes the removal of the 5'-leader sequence from pre-tRNA to produce the mature 5'-terminus. It can also cleave other RNA substrates such as 4.5S RNA. The protein component plays an auxiliary but essential role in vivo by binding to the 5'-leader sequence and broadening the substrate specificity of the ribozyme. The protein is Ribonuclease P protein component of Picosynechococcus sp. (strain ATCC 27264 / PCC 7002 / PR-6) (Agmenellum quadruplicatum).